Here is a 169-residue protein sequence, read N- to C-terminus: Vimentin-type intermediate filament-associated coiled-coil protein (169 aa).

Residues 7 to 89 (LQIREANAHL…VHSLQATVHQ (83 aa)) are a coiled coil. Residues 126–135 (RLGPLPASDP) show a composition bias toward low complexity. Positions 126–169 (RLGPLPASDPGHPPPGGPGPPLDNSTGEEADRDHLQPAVFGTTV) are disordered. Residues 136 to 146 (GHPPPGGPGPP) are compositionally biased toward pro residues.

The protein resides in the cytoplasm. The sequence is that of Vimentin-type intermediate filament-associated coiled-coil protein (VMAC) from Homo sapiens (Human).